The primary structure comprises 142 residues: DNA-directed RNA polymerase II subunit RPB4 (142 aa).

The protein belongs to the eukaryotic RPB4 RNA polymerase subunit family. As to quaternary structure, component of the RNA polymerase II (Pol II) core complex consisting of 12 subunits: a ten-subunit catalytic core composed of POLR2A/RPB1, POLR2B/RPB2, POLR2C/RPB3, POLR2I/RPB9, POLR2J/RPB11, POLR2E/RPABC1, POLR2F/RPABC2, POLR2H/RPABC3, POLR2K/RPABC4 and POLR2L/RPABC5 and a mobile stalk composed of two subunits POLR2D/RPB4 and POLR2G/RPB7, protruding from the core and functioning primarily in transcription initiation. Part of Pol II(G) complex, in which Pol II core associates with an additional subunit POLR2M; unlike conventional Pol II, Pol II(G) functions as a transcriptional repressor. Part of TBP-based Pol II pre-initiation complex (PIC), in which Pol II core assembles with general transcription factors and other specific initiation factors including GTF2E1, GTF2E2, GTF2F1, GTF2F2, TCEA1, ERCC2, ERCC3, GTF2H2, GTF2H3, GTF2H4, GTF2H5, GTF2A1, GTF2A2, GTF2B and TBP; this large multi-subunit PIC complex mediates DNA unwinding and targets Pol II core to the transcription start site where the first phosphodiester bond forms.

It localises to the nucleus. In terms of biological role, core component of RNA polymerase II (Pol II), a DNA-dependent RNA polymerase which synthesizes mRNA precursors and many functional non-coding RNAs using the four ribonucleoside triphosphates as substrates. Pol II is the central component of the basal RNA polymerase II transcription machinery. It is composed of mobile elements that move relative to each other. POLR2D/RPB4 is part of a subcomplex with POLR2G/RPB7 that binds to a pocket formed by POLR2A/RPB1, POLR2B/RPB2 and POLR2F/RPABC2 at the base of the clamp element. The POLR2D/RPB4-POLR2G/RPB7 subcomplex seems to lock the clamp via POLR2G/RPB7 in the closed conformation thus preventing double-stranded DNA to enter the active site cleft. The POLR2D/RPB4-POLR2G/RPB7 subcomplex binds single-stranded DNA and RNA. The protein is DNA-directed RNA polymerase II subunit RPB4 (POLR2D) of Homo sapiens (Human).